Consider the following 453-residue polypeptide: Chromosomal replication initiator protein DnaA (453 aa).

The interval 1–71 (MSEKEIWEKV…QAILFDVVGY (71 aa)) is domain I, interacts with DnaA modulators. Residues 71-114 (YEVKPHFITTEELANYSNNETATPKETTKPSTETTEDNHVLGRE) are domain II. The segment at 115-331 (QFNAHNTFDT…GALTRLLAYS (217 aa)) is domain III, AAA+ region. ATP contacts are provided by G159, G161, K162, and T163. Positions 332–453 (QLLGKPITTE…ENLEKEIRNV (122 aa)) are domain IV, binds dsDNA.

This sequence belongs to the DnaA family. In terms of assembly, oligomerizes as a right-handed, spiral filament on DNA at oriC.

It is found in the cytoplasm. Plays an essential role in the initiation and regulation of chromosomal replication. ATP-DnaA binds to the origin of replication (oriC) to initiate formation of the DNA replication initiation complex once per cell cycle. Binds the DnaA box (a 9 base pair repeat at the origin) and separates the double-stranded (ds)DNA. Forms a right-handed helical filament on oriC DNA; dsDNA binds to the exterior of the filament while single-stranded (ss)DNA is stabiized in the filament's interior. The ATP-DnaA-oriC complex binds and stabilizes one strand of the AT-rich DNA unwinding element (DUE), permitting loading of DNA polymerase. After initiation quickly degrades to an ADP-DnaA complex that is not apt for DNA replication. Binds acidic phospholipids. The protein is Chromosomal replication initiator protein DnaA of Staphylococcus aureus (strain Mu3 / ATCC 700698).